A 427-amino-acid chain; its full sequence is 3-phosphoshikimate 1-carboxyvinyltransferase (427 aa).

Residues K22, S23, and R27 each coordinate 3-phosphoshikimate. K22 provides a ligand contact to phosphoenolpyruvate. 2 residues coordinate phosphoenolpyruvate: G96 and R124. 7 residues coordinate 3-phosphoshikimate: S170, S171, Q172, S198, D313, N336, and K340. Q172 contacts phosphoenolpyruvate. D313 functions as the Proton acceptor in the catalytic mechanism. Residues R344, R386, and K411 each coordinate phosphoenolpyruvate.

This sequence belongs to the EPSP synthase family. As to quaternary structure, monomer.

The protein localises to the cytoplasm. It carries out the reaction 3-phosphoshikimate + phosphoenolpyruvate = 5-O-(1-carboxyvinyl)-3-phosphoshikimate + phosphate. Its pathway is metabolic intermediate biosynthesis; chorismate biosynthesis; chorismate from D-erythrose 4-phosphate and phosphoenolpyruvate: step 6/7. Catalyzes the transfer of the enolpyruvyl moiety of phosphoenolpyruvate (PEP) to the 5-hydroxyl of shikimate-3-phosphate (S3P) to produce enolpyruvyl shikimate-3-phosphate and inorganic phosphate. The chain is 3-phosphoshikimate 1-carboxyvinyltransferase from Aeromonas salmonicida (strain A449).